The sequence spans 48 residues: Delta-stichotoxin-She1a (48 aa).

Intrachain disulfides connect Cys3/Cys43, Cys5/Cys33, and Cys26/Cys44.

This sequence belongs to the sea anemone sodium channel inhibitory toxin family. Type II subfamily.

The protein localises to the secreted. The protein resides in the nematocyst. In terms of biological role, binds specifically to voltage-gated sodium channels (Nav), thereby delaying their inactivation during signal transduction. Is highly toxic to crabs (by intrahemocoelic injection), but without effect upon mice (by intraperitoneal injection). This chain is Delta-stichotoxin-She1a, found in Stichodactyla helianthus (Sun anemone).